The following is a 438-amino-acid chain: UDP-N-acetylglucosamine 1-carboxyvinyltransferase (438 aa).

35 to 36 (KN) contributes to the phosphoenolpyruvate binding site. Arg-105 provides a ligand contact to UDP-N-acetyl-alpha-D-glucosamine. Cys-129 serves as the catalytic Proton donor. Position 129 is a 2-(S-cysteinyl)pyruvic acid O-phosphothioketal (Cys-129). Residues 134 to 138 (RPVDL), Asp-321, and Val-343 each bind UDP-N-acetyl-alpha-D-glucosamine.

It belongs to the EPSP synthase family. MurA subfamily.

The protein localises to the cytoplasm. It carries out the reaction phosphoenolpyruvate + UDP-N-acetyl-alpha-D-glucosamine = UDP-N-acetyl-3-O-(1-carboxyvinyl)-alpha-D-glucosamine + phosphate. It participates in cell wall biogenesis; peptidoglycan biosynthesis. Its function is as follows. Cell wall formation. Adds enolpyruvyl to UDP-N-acetylglucosamine. In Synechocystis sp. (strain ATCC 27184 / PCC 6803 / Kazusa), this protein is UDP-N-acetylglucosamine 1-carboxyvinyltransferase.